The sequence spans 569 residues: MSRSTRLDRVFYWLGLIVIAWAVLTFLLVPMLAALQAALFRLGSLAMFDAVSELARSRRVRAALWNTVWMTAATTLTVTIVGMFQVAVLEYFRVPGRGFLKIAFSTPLVFGGVVAAAGYNFTYGPSGAITAALAALFPSLPRDWFIGWFGVLFAHTFLMTSFHFLFLRAAMRRVDYSTIEAARSMGASEMTILRCVVLPVILPTVLAVTLLTLITAMGSFAAPQVLGGRDFHMLSQMVLTLNSLRRPDMAALLALLMGLVLMGLILLSQYFEAKGAYTAGAKATTRIQLRAIRNPLARIVVTALAYLLAAIYLMPVALIVLFSFAPASSIGIDVLPSSFTLANYARVLGGGAAFVPFFNSMLMSSIAVAVGLAITLFAVPIMVRKRNWLTRGLDICFVLPWIIPTMLLAVGLIVAFDAPNPLVGNLVLLGSYWLLPIGYVIFSLPLMVRFMRSAFIGIDPAFDEAARAMGASGPYRLRRVVLPLVAPTAILVAGMKFNNLLAEYPLSAFLYNVNNKPLPIAIVDGAVSADPDQAAVSLVYVTLIMAFSLAVILIAERLSLGRTPESSNL.

13 helical membrane passes run 10-30, 68-88, 98-118, 121-141, 145-165, 196-216, 247-267, 304-324, 363-383, 395-415, 426-446, 480-500, and 534-554; these read VFYW…LLVP, VWMT…QVAV, GFLK…AAAG, FTYG…PSLP, FIGW…FHFL, VVLP…LITA, PDMA…LILL, LAYL…LFSF, MSSI…PIMV, ICFV…LIVA, LVLL…SLPL, VVLP…FNNL, and AAVS…VILI. Residues 64 to 268 enclose the ABC transmembrane type-1 1 domain; sequence LWNTVWMTAA…LVLMGLILLS (205 aa). The ABC transmembrane type-1 2 domain occupies 357 to 551; that stretch reads FFNSMLMSSI…TLIMAFSLAV (195 aa).

It belongs to the binding-protein-dependent transport system permease family. CysTW subfamily.

It is found in the cell inner membrane. Functionally, probably part of the binding-protein-dependent transport system y4fNOP. Probably responsible for the translocation of the substrate across the membrane. In Sinorhizobium fredii (strain NBRC 101917 / NGR234), this protein is Probable ABC transporter permease protein y4fN.